The following is a 385-amino-acid chain: Tryptophan--tRNA ligase (385 aa).

A 'HIGH' region motif is present at residues 89 to 98; sequence PSSKTMHIGH. The 'KMSKS' region signature appears at 268 to 272; sequence KMSAS.

The protein belongs to the class-I aminoacyl-tRNA synthetase family. Homodimer.

It carries out the reaction tRNA(Trp) + L-tryptophan + ATP = L-tryptophyl-tRNA(Trp) + AMP + diphosphate + H(+). In Encephalitozoon cuniculi (strain GB-M1) (Microsporidian parasite), this protein is Tryptophan--tRNA ligase.